Reading from the N-terminus, the 262-residue chain is Thiazole synthase (262 aa).

The active-site Schiff-base intermediate with DXP is Lys-98. Residues Gly-159, 186-187 (AG), and 208-209 (NT) contribute to the 1-deoxy-D-xylulose 5-phosphate site.

It belongs to the ThiG family. As to quaternary structure, homotetramer. Forms heterodimers with either ThiH or ThiS.

It is found in the cytoplasm. It catalyses the reaction [ThiS sulfur-carrier protein]-C-terminal-Gly-aminoethanethioate + 2-iminoacetate + 1-deoxy-D-xylulose 5-phosphate = [ThiS sulfur-carrier protein]-C-terminal Gly-Gly + 2-[(2R,5Z)-2-carboxy-4-methylthiazol-5(2H)-ylidene]ethyl phosphate + 2 H2O + H(+). The protein operates within cofactor biosynthesis; thiamine diphosphate biosynthesis. In terms of biological role, catalyzes the rearrangement of 1-deoxy-D-xylulose 5-phosphate (DXP) to produce the thiazole phosphate moiety of thiamine. Sulfur is provided by the thiocarboxylate moiety of the carrier protein ThiS. In vitro, sulfur can be provided by H(2)S. The sequence is that of Thiazole synthase from Hahella chejuensis (strain KCTC 2396).